A 501-amino-acid chain; its full sequence is Lysine--tRNA ligase (501 aa).

Glu-411 and Glu-418 together coordinate Mg(2+).

Belongs to the class-II aminoacyl-tRNA synthetase family. In terms of assembly, homodimer. The cofactor is Mg(2+).

The protein localises to the cytoplasm. It carries out the reaction tRNA(Lys) + L-lysine + ATP = L-lysyl-tRNA(Lys) + AMP + diphosphate. In Aliivibrio fischeri (strain ATCC 700601 / ES114) (Vibrio fischeri), this protein is Lysine--tRNA ligase.